Reading from the N-terminus, the 2270-residue chain is Protein DOP1B (2270 aa).

3 disordered regions span residues 548 to 572 (METP…VEGE), 697 to 716 (LKQR…TEEE), and 1084 to 1145 (QEQD…DMPR). Over residues 1095 to 1145 (ADTSTGHNDSDNTSSFTPSSVDLSSDQNYRDNTAGQVTHKNTGQQNMDMPR) the composition is skewed to polar residues.

The protein belongs to the DOP1 family.

The protein localises to the golgi apparatus membrane. Functionally, may be involved in protein traffic between late Golgi and early endosomes. The protein is Protein DOP1B (dop1b) of Xenopus laevis (African clawed frog).